A 511-amino-acid polypeptide reads, in one-letter code: MKKRALVSVSDKTGVVEFVKGLLEQGIEVISTGGTKKLLEENGLQVIGISEVTGFPEIMDGRVKTLHPNIHGGLLAVRDNEMHVAQMNELGIQPIDFVVVNLYPFKETIAKPDVTFADAIENIDIGGPTMIRSAAKNHKFVSVIVDPVDYDVVLAELKENGEVTEETKRKLAAKVFRHTAAYDALISNYLTKQMGEESPETVTVTFEKKQDLRYGENPHQKATFYKAPFAATSSVAYAEQLHGKELSYNNINDADAALSIVKEFTEPAVVAVKHMNPCGVGVGADIHEAYTRAYEADPVSIFGGIIAANREIDKATAEKLHEIFLEIVIAPSFSQEALEVLQSKKNLRLLTVNIEKATSASKKLTSVQGGLLVQEEDTLSLDEDAISIPTKREPSEQEWKDLKLAWKVVKHVKSNAIVLANDNMTVGVGAGQMNRVGSAKIAITQAGEKAQGSALASDAFFPMPDTVEEAAKAGITAIIQPGGSIRDEDSIKMADAYGITMVFTGVRHFKH.

One can recognise an MGS-like domain in the interval 1–145; sequence MKKRALVSVS…KNHKFVSVIV (145 aa).

The protein belongs to the PurH family.

It carries out the reaction (6R)-10-formyltetrahydrofolate + 5-amino-1-(5-phospho-beta-D-ribosyl)imidazole-4-carboxamide = 5-formamido-1-(5-phospho-D-ribosyl)imidazole-4-carboxamide + (6S)-5,6,7,8-tetrahydrofolate. It catalyses the reaction IMP + H2O = 5-formamido-1-(5-phospho-D-ribosyl)imidazole-4-carboxamide. Its pathway is purine metabolism; IMP biosynthesis via de novo pathway; 5-formamido-1-(5-phospho-D-ribosyl)imidazole-4-carboxamide from 5-amino-1-(5-phospho-D-ribosyl)imidazole-4-carboxamide (10-formyl THF route): step 1/1. The protein operates within purine metabolism; IMP biosynthesis via de novo pathway; IMP from 5-formamido-1-(5-phospho-D-ribosyl)imidazole-4-carboxamide: step 1/1. This Bacillus mycoides (strain KBAB4) (Bacillus weihenstephanensis) protein is Bifunctional purine biosynthesis protein PurH.